The following is a 195-amino-acid chain: Pyridoxal 5'-phosphate synthase subunit PdxT (195 aa).

49-51 (GES) contributes to the L-glutamine binding site. Cys-81 (nucleophile) is an active-site residue. Residues Arg-113 and 141 to 142 (IR) contribute to the L-glutamine site. Residues His-177 and Glu-179 each act as charge relay system in the active site.

The protein belongs to the glutaminase PdxT/SNO family. As to quaternary structure, in the presence of PdxS, forms a dodecamer of heterodimers. Only shows activity in the heterodimer.

The catalysed reaction is aldehydo-D-ribose 5-phosphate + D-glyceraldehyde 3-phosphate + L-glutamine = pyridoxal 5'-phosphate + L-glutamate + phosphate + 3 H2O + H(+). The enzyme catalyses L-glutamine + H2O = L-glutamate + NH4(+). Its pathway is cofactor biosynthesis; pyridoxal 5'-phosphate biosynthesis. Catalyzes the hydrolysis of glutamine to glutamate and ammonia as part of the biosynthesis of pyridoxal 5'-phosphate. The resulting ammonia molecule is channeled to the active site of PdxS. The protein is Pyridoxal 5'-phosphate synthase subunit PdxT of Mycolicibacterium vanbaalenii (strain DSM 7251 / JCM 13017 / BCRC 16820 / KCTC 9966 / NRRL B-24157 / PYR-1) (Mycobacterium vanbaalenii).